Here is a 463-residue protein sequence, read N- to C-terminus: Retinoic acid receptor RXR-gamma (463 aa).

Residues 1 to 138 form a modulating region; it reads MYGNYSHFMK…TSPGSLVKHI (138 aa). Residues 16–53 form a disordered region; that stretch reads GGSPGHTGSTSMSPSVALPTGKPMDSHPSYTDTPVSAP. 2 NR C4-type zinc fingers span residues 139–159 and 175–199; these read CAIC…CEGC and CRDN…YQKC. The segment at residues 139–204 is a DNA-binding region (nuclear receptor); sequence CAICGDRSSG…RYQKCLVMGM (66 aa). A hinge region spans residues 205 to 230; that stretch reads KREAVQEERQRSRERAESEAECASTG. Residues 231–459 form the NR LBD domain; it reads HEDMPVERIL…TFLMEMLETP (229 aa).

The protein belongs to the nuclear hormone receptor family. NR2 subfamily. In terms of assembly, homodimer. Heterodimer with a RAR molecule. Binds DNA preferentially as a RAR/RXR heterodimer. Interacts with RARA. Acetylated by EP300. In terms of tissue distribution, expressed in the liver, but not detected in the adrenal gland (at protein level). Restricted expression in adrenal gland, kidney, liver, brain and lungs. Strong expression in heart and muscles.

It is found in the nucleus. It localises to the cytoplasm. Receptor for retinoic acid. Retinoic acid receptors bind as heterodimers to their target response elements in response to their ligands, all-trans or 9-cis retinoic acid, and regulate gene expression in various biological processes. The RAR/RXR heterodimers bind to the retinoic acid response elements (RARE) composed of tandem 5'-AGGTCA-3' sites known as DR1-DR5. The high affinity ligand for RXRs is 9-cis retinoic acid. This Rattus norvegicus (Rat) protein is Retinoic acid receptor RXR-gamma (Rxrg).